The sequence spans 62 residues: Omega-conotoxin-like Bu11 (62 aa).

A signal peptide spans 1–7 (ACQLITA). Residues 8 to 27 (EDSRGTQLHRALRSTSKVSK) constitute a propeptide that is removed on maturation. 3 disulfide bridges follow: cysteine 31–cysteine 46, cysteine 38–cysteine 49, and cysteine 45–cysteine 56.

Belongs to the conotoxin O1 superfamily. Expressed by the venom duct.

The protein resides in the secreted. Functionally, omega-conotoxins act at presynaptic membranes, they bind and block voltage-gated calcium channels (Cav). The protein is Omega-conotoxin-like Bu11 of Conus bullatus (Bubble cone).